We begin with the raw amino-acid sequence, 198 residues long: FMN-dependent NADH:quinone oxidoreductase 2 (198 aa).

136–139 (SRGG) is an FMN binding site.

It belongs to the azoreductase type 1 family. Homodimer. FMN is required as a cofactor.

It catalyses the reaction 2 a quinone + NADH + H(+) = 2 a 1,4-benzosemiquinone + NAD(+). The enzyme catalyses N,N-dimethyl-1,4-phenylenediamine + anthranilate + 2 NAD(+) = 2-(4-dimethylaminophenyl)diazenylbenzoate + 2 NADH + 2 H(+). Its function is as follows. Quinone reductase that provides resistance to thiol-specific stress caused by electrophilic quinones. Also exhibits azoreductase activity. Catalyzes the reductive cleavage of the azo bond in aromatic azo compounds to the corresponding amines. This chain is FMN-dependent NADH:quinone oxidoreductase 2, found in Clostridium perfringens (strain 13 / Type A).